A 141-amino-acid polypeptide reads, in one-letter code: Large ribosomal subunit protein uL11 (141 aa).

This sequence belongs to the universal ribosomal protein uL11 family. In terms of assembly, part of the ribosomal stalk of the 50S ribosomal subunit. Interacts with L10 and the large rRNA to form the base of the stalk. L10 forms an elongated spine to which L12 dimers bind in a sequential fashion forming a multimeric L10(L12)X complex. One or more lysine residues are methylated.

Its function is as follows. Forms part of the ribosomal stalk which helps the ribosome interact with GTP-bound translation factors. The chain is Large ribosomal subunit protein uL11 from Phytoplasma australiense.